A 208-amino-acid chain; its full sequence is Uracil phosphoribosyltransferase (208 aa).

Residues R78, R103, and 130–138 (DPMFATGGT) contribute to the 5-phospho-alpha-D-ribose 1-diphosphate site. Uracil is bound by residues I193 and 198–200 (GDA). Residue D199 participates in 5-phospho-alpha-D-ribose 1-diphosphate binding.

It belongs to the UPRTase family. Mg(2+) is required as a cofactor.

The catalysed reaction is UMP + diphosphate = 5-phospho-alpha-D-ribose 1-diphosphate + uracil. It functions in the pathway pyrimidine metabolism; UMP biosynthesis via salvage pathway; UMP from uracil: step 1/1. Its activity is regulated as follows. Allosterically activated by GTP. Functionally, catalyzes the conversion of uracil and 5-phospho-alpha-D-ribose 1-diphosphate (PRPP) to UMP and diphosphate. The sequence is that of Uracil phosphoribosyltransferase from Campylobacter curvus (strain 525.92).